Consider the following 303-residue polypeptide: Glycine--tRNA ligase alpha subunit (303 aa).

Belongs to the class-II aminoacyl-tRNA synthetase family. Tetramer of two alpha and two beta subunits.

The protein resides in the cytoplasm. The catalysed reaction is tRNA(Gly) + glycine + ATP = glycyl-tRNA(Gly) + AMP + diphosphate. This chain is Glycine--tRNA ligase alpha subunit, found in Salmonella agona (strain SL483).